The sequence spans 93 residues: Small ribosomal subunit protein bS20 (93 aa).

Positions 72 to 93 are disordered; that stretch reads KNTASRKKSRLTRKFNSVYKAS. A compositionally biased stretch (basic residues) spans 74–84; the sequence is TASRKKSRLTR.

It belongs to the bacterial ribosomal protein bS20 family.

In terms of biological role, binds directly to 16S ribosomal RNA. This chain is Small ribosomal subunit protein bS20, found in Carboxydothermus hydrogenoformans (strain ATCC BAA-161 / DSM 6008 / Z-2901).